We begin with the raw amino-acid sequence, 452 residues long: Ribosomal protein uS12 methylthiotransferase RimO (452 aa).

One can recognise an MTTase N-terminal domain in the interval 3-118 (GKIGFVSLGC…VMQAIHLHLP (116 aa)). Positions 12, 48, 77, 149, 153, and 156 each coordinate [4Fe-4S] cluster. Residues 135–381 (LTPKHYAYLK…MAKAEDISIK (247 aa)) enclose the Radical SAM core domain. One can recognise a TRAM domain in the interval 384-452 (AKKIGKRVQV…SQGHDLIAET (69 aa)).

The protein belongs to the methylthiotransferase family. RimO subfamily. [4Fe-4S] cluster is required as a cofactor.

It localises to the cytoplasm. It carries out the reaction L-aspartate(89)-[ribosomal protein uS12]-hydrogen + (sulfur carrier)-SH + AH2 + 2 S-adenosyl-L-methionine = 3-methylsulfanyl-L-aspartate(89)-[ribosomal protein uS12]-hydrogen + (sulfur carrier)-H + 5'-deoxyadenosine + L-methionine + A + S-adenosyl-L-homocysteine + 2 H(+). Functionally, catalyzes the methylthiolation of an aspartic acid residue of ribosomal protein uS12. This Polynucleobacter asymbioticus (strain DSM 18221 / CIP 109841 / QLW-P1DMWA-1) (Polynucleobacter necessarius subsp. asymbioticus) protein is Ribosomal protein uS12 methylthiotransferase RimO.